We begin with the raw amino-acid sequence, 150 residues long: FAD synthase (150 aa).

ATP is bound by residues 20-21, 25-28, and Asp-103; these read TF and HPGH.

It belongs to the archaeal FAD synthase family. In terms of assembly, homodimer. It depends on a divalent metal cation as a cofactor.

It catalyses the reaction FMN + ATP + H(+) = FAD + diphosphate. It functions in the pathway cofactor biosynthesis; FAD biosynthesis; FAD from FMN: step 1/1. In terms of biological role, catalyzes the transfer of the AMP portion of ATP to flavin mononucleotide (FMN) to produce flavin adenine dinucleotide (FAD) coenzyme. This chain is FAD synthase, found in Methanohalobium evestigatum (strain ATCC BAA-1072 / DSM 3721 / NBRC 107634 / OCM 161 / Z-7303).